The chain runs to 301 residues: Probable alpha-L-glutamate ligase 1 (301 aa).

The ATP-grasp domain maps to 104–287 (LQLLSRKGIG…VTEPIVEYIE (184 aa)). ATP contacts are provided by residues Lys-141, 178–179 (EY), Asp-187, and 211–213 (RSN). Mg(2+) contacts are provided by Asp-248, Glu-260, and Asn-262. Asp-248, Glu-260, and Asn-262 together coordinate Mn(2+).

It belongs to the RimK family. It depends on Mg(2+) as a cofactor. Mn(2+) serves as cofactor.

In Shewanella oneidensis (strain ATCC 700550 / JCM 31522 / CIP 106686 / LMG 19005 / NCIMB 14063 / MR-1), this protein is Probable alpha-L-glutamate ligase 1.